Reading from the N-terminus, the 589-residue chain is Aspartate--tRNA ligase (589 aa).

E175 serves as a coordination point for L-aspartate. Positions 199–202 (QIFK) are aspartate. L-aspartate is bound at residue R221. Residues 221–223 (RDE) and Q230 contribute to the ATP site. H449 is an L-aspartate binding site. E483 is an ATP binding site. R490 is an L-aspartate binding site. 535-538 (GLDR) lines the ATP pocket.

It belongs to the class-II aminoacyl-tRNA synthetase family. Type 1 subfamily. As to quaternary structure, homodimer.

It localises to the cytoplasm. The catalysed reaction is tRNA(Asp) + L-aspartate + ATP = L-aspartyl-tRNA(Asp) + AMP + diphosphate. Catalyzes the attachment of L-aspartate to tRNA(Asp) in a two-step reaction: L-aspartate is first activated by ATP to form Asp-AMP and then transferred to the acceptor end of tRNA(Asp). The polypeptide is Aspartate--tRNA ligase (Shouchella clausii (strain KSM-K16) (Alkalihalobacillus clausii)).